The sequence spans 360 residues: 3-dehydroquinate synthase (360 aa).

NAD(+) is bound by residues 71 to 76 (DGEQYK), 105 to 109 (GVVGD), 129 to 130 (TT), K142, K151, and 169 to 172 (TLNT). Residues E184, H248, and H265 each contribute to the Zn(2+) site.

It belongs to the sugar phosphate cyclases superfamily. Dehydroquinate synthase family. Requires Co(2+) as cofactor. It depends on Zn(2+) as a cofactor. The cofactor is NAD(+).

The protein localises to the cytoplasm. The enzyme catalyses 7-phospho-2-dehydro-3-deoxy-D-arabino-heptonate = 3-dehydroquinate + phosphate. Its pathway is metabolic intermediate biosynthesis; chorismate biosynthesis; chorismate from D-erythrose 4-phosphate and phosphoenolpyruvate: step 2/7. Functionally, catalyzes the conversion of 3-deoxy-D-arabino-heptulosonate 7-phosphate (DAHP) to dehydroquinate (DHQ). This Coxiella burnetii (strain CbuK_Q154) (Coxiella burnetii (strain Q154)) protein is 3-dehydroquinate synthase.